We begin with the raw amino-acid sequence, 683 residues long: Cytoskeleton-associated protein 2 (683 aa).

Disordered regions lie at residues 1 to 28 and 153 to 175; these read MSTP…QRRQ and NSKK…KKPV. 2 positions are modified to phosphoserine: serine 178 and serine 190. Disordered regions lie at residues 214-236 and 336-403; these read KATK…SSNM and EKSE…EKPV. Over residues 219 to 236 the composition is skewed to polar residues; the sequence is QPVNTSSVTVKSNRSSNM. Basic and acidic residues-rich tracts occupy residues 336–345 and 362–376; these read EKSEPVDQRR and ETSE…EWKA. Serine 534 bears the Phosphoserine mark. 2 positions are modified to phosphothreonine: threonine 579 and threonine 582. Serine 595 carries the phosphoserine modification. A phosphothreonine mark is found at threonine 596 and threonine 597. Tyrosine 599 carries the post-translational modification Phosphotyrosine. Phosphoserine is present on serine 602.

This sequence belongs to the CKAP2 family. Associates with alpha- and beta-tubulins. As to expression, abundant in testis, thymus, and in tumor derived cell lines, while barely detectable in liver, prostate, and kidney.

It is found in the cytoplasm. The protein resides in the cytoskeleton. The protein localises to the spindle. It localises to the spindle pole. In terms of biological role, possesses microtubule stabilizing properties. Involved in regulating aneuploidy, cell cycling, and cell death in a p53/TP53-dependent manner. In Homo sapiens (Human), this protein is Cytoskeleton-associated protein 2.